A 444-amino-acid polypeptide reads, in one-letter code: Methylenetetrahydrofolate--tRNA-(uracil-5-)-methyltransferase TrmFO (444 aa).

10–15 (GAGLAG) serves as a coordination point for FAD.

The protein belongs to the MnmG family. TrmFO subfamily. FAD serves as cofactor.

It localises to the cytoplasm. It carries out the reaction uridine(54) in tRNA + (6R)-5,10-methylene-5,6,7,8-tetrahydrofolate + NADH + H(+) = 5-methyluridine(54) in tRNA + (6S)-5,6,7,8-tetrahydrofolate + NAD(+). The enzyme catalyses uridine(54) in tRNA + (6R)-5,10-methylene-5,6,7,8-tetrahydrofolate + NADPH + H(+) = 5-methyluridine(54) in tRNA + (6S)-5,6,7,8-tetrahydrofolate + NADP(+). Its function is as follows. Catalyzes the folate-dependent formation of 5-methyl-uridine at position 54 (M-5-U54) in all tRNAs. This is Methylenetetrahydrofolate--tRNA-(uracil-5-)-methyltransferase TrmFO from Streptococcus equi subsp. equi (strain 4047).